The chain runs to 287 residues: 33 kDa chaperonin (287 aa).

Cystine bridges form between C231/C233 and C264/C267.

It belongs to the HSP33 family. Post-translationally, under oxidizing conditions two disulfide bonds are formed involving the reactive cysteines. Under reducing conditions zinc is bound to the reactive cysteines and the protein is inactive.

The protein localises to the cytoplasm. Redox regulated molecular chaperone. Protects both thermally unfolding and oxidatively damaged proteins from irreversible aggregation. Plays an important role in the bacterial defense system toward oxidative stress. The chain is 33 kDa chaperonin from Thermosipho melanesiensis (strain DSM 12029 / CIP 104789 / BI429).